The chain runs to 313 residues: Esterase mpl1 (313 aa).

Active-site charge relay system residues include Ser-174, Asp-259, and His-287.

The protein belongs to the LovG family.

The protein operates within mycotoxin biosynthesis. Functionally, esterase; part of the gene cluster that mediates the biosynthesis of the mycotoxin citrinin, a hepato-nephrotoxic compound to humans due to inhibition of respiration complex III. The pathway begins with the synthesis of a keto-aldehyde intermediate by the citrinin PKS (pksCT) from successive condensations of 4 malonyl-CoA units, presumably with a simple acetyl-CoA starter unit. Release of the keto-aldehyde intermediate is consistent with the presence of the C-terminal reductive release domain. Mp11 collaborates with pksCT by catalyzing the hydrolysis of ACP-bound acyl intermediates to free the ACP from stalled intermediates. Mpl2 then catalyzes the oxidation of the C-12 methyl of the ketone intermediate to an alcohol intermediate which is further oxidized by the oxidoreductase mpl7 to produce a bisaldehyde intermediate. The fourth catalytic step is catalyzed by the mpl4 aldehyde dehydrogenase. The final transformation is the reduction of C-3 by mpl6 to provide the chemically stable citrinin nucleus. The protein is Esterase mpl1 of Monascus purpureus (Red mold).